Consider the following 24-residue polypeptide: Brevinin-1Pd (24 aa).

Cys18 and Cys24 form a disulfide bridge.

Expressed by the skin glands.

It localises to the secreted. In terms of biological role, antibacterial activity against Gram-positive bacterium S.aureus and Gram-negative bacterium E.coli. Has activity against C.albicans. The polypeptide is Brevinin-1Pd (Lithobates pipiens (Northern leopard frog)).